Reading from the N-terminus, the 254-residue chain is 3-deoxy-manno-octulosonate cytidylyltransferase (254 aa).

This sequence belongs to the KdsB family.

It is found in the cytoplasm. It catalyses the reaction 3-deoxy-alpha-D-manno-oct-2-ulosonate + CTP = CMP-3-deoxy-beta-D-manno-octulosonate + diphosphate. The protein operates within nucleotide-sugar biosynthesis; CMP-3-deoxy-D-manno-octulosonate biosynthesis; CMP-3-deoxy-D-manno-octulosonate from 3-deoxy-D-manno-octulosonate and CTP: step 1/1. Its pathway is bacterial outer membrane biogenesis; lipopolysaccharide biosynthesis. Its function is as follows. Activates KDO (a required 8-carbon sugar) for incorporation into bacterial lipopolysaccharide in Gram-negative bacteria. The polypeptide is 3-deoxy-manno-octulosonate cytidylyltransferase (Chlamydia caviae (strain ATCC VR-813 / DSM 19441 / 03DC25 / GPIC) (Chlamydophila caviae)).